A 102-amino-acid polypeptide reads, in one-letter code: UV-induced protein uvi31 (102 aa).

This sequence belongs to the BolA/IbaG family.

Its subcellular location is the mitochondrion matrix. It localises to the cytoplasm. The protein localises to the nucleus. Acts as a mitochondrial iron-sulfur (Fe-S) cluster assembly factor that facilitates [4Fe-4S] cluster insertion into a subset of mitochondrial proteins such as lipoyl synthase (LS) and succinate dehydrogenase (SDH). Required during the last step of iron-sulfur protein assembly when the iron-sulfur cluster is inserted into the target protein. Probably acts together with the monothiol glutaredoxin grx5. Not required for [2Fe-2S] cluster insertion into mitochondrial proteins. May be involved in control of cell division, especially during the resumption from cell cycle arrest. In Schizosaccharomyces pombe (strain 972 / ATCC 24843) (Fission yeast), this protein is UV-induced protein uvi31.